A 145-amino-acid polypeptide reads, in one-letter code: KDDIERMVKEAESYKEEDDKQRDRIAAKNSLEGYAFQMKATLDEEAIKSKVSEEDRKKILDKVDEVLKWLDANALAEKDEFEHQRKELESVCNPIITKLYQQAGGAGAGGMPGGFPGGFPGTDGSGGGAAGGDGGKSGPTIEEVD.

Disordered stretches follow at residues 1–21 and 103–145; these read KDDI…DDKQ and AGGA…EEVD. The segment covering 104 to 137 has biased composition (gly residues); it reads GGAGAGGMPGGFPGGFPGTDGSGGGAAGGDGGKS.

It belongs to the heat shock protein 70 family.

The sequence is that of Allergen MAG29 (MAG29) from Dermatophagoides farinae (American house dust mite).